A 485-amino-acid polypeptide reads, in one-letter code: Tektin-5 (485 aa).

Coiled-coil stretches lie at residues 113-185 (SRLT…EVNC), 225-251 (QQQM…ALER), 342-385 (FNAR…MAKE), and 423-443 (DDTL…LQLL).

Belongs to the tektin family. Microtubule inner protein component of sperm flagellar doublet microtubules. Interacts with TEKT3. Post-translationally, ubiquitinated, leading to its degradation. Deubiquitinated by USP16, promoting its stability.

The protein resides in the cytoplasm. It localises to the cytoskeleton. It is found in the flagellum axoneme. Its function is as follows. Sperm-specific microtubule inner protein (MIP) part of the dynein-decorated doublet microtubules (DMTs) in flagellar axoneme. Forms an extensive interaction network in different conformations that reinforces the helix bundle composed by other tektin proteins (TEKT1 to TEKT4) and MIPs to anchor the tektin bundle onto the tubulin wall of A-tubule of the sperm flagellum. The chain is Tektin-5 (TEKT5) from Macaca fascicularis (Crab-eating macaque).